Here is a 230-residue protein sequence, read N- to C-terminus: Heptaprenylglyceryl phosphate synthase (230 aa).

Position 12 (Lys12) interacts with sn-glycerol 1-phosphate. Residues Asp14 and Thr40 each coordinate Mg(2+). Sn-glycerol 1-phosphate contacts are provided by residues 159–164, Gly189, and 209–210; these read YVEYSG and GD.

The protein belongs to the GGGP/HepGP synthase family. Group I subfamily. Homodimer. Requires Mg(2+) as cofactor.

It catalyses the reaction sn-glycerol 1-phosphate + all-trans-heptaprenyl diphosphate = 3-heptaprenyl-sn-glycero-1-phosphate + diphosphate. It functions in the pathway membrane lipid metabolism; glycerophospholipid metabolism. Its function is as follows. Prenyltransferase that catalyzes in vivo the transfer of the heptaprenyl moiety of heptaprenyl pyrophosphate (HepPP; 35 carbon atoms) to the C3 hydroxyl of sn-glycerol-1-phosphate (G1P), producing heptaprenylglyceryl phosphate (HepGP). This reaction is an ether-bond-formation step in the biosynthesis of archaea-type G1P-based membrane lipids found in Bacillales. This Staphylococcus epidermidis (strain ATCC 35984 / DSM 28319 / BCRC 17069 / CCUG 31568 / BM 3577 / RP62A) protein is Heptaprenylglyceryl phosphate synthase.